Reading from the N-terminus, the 388-residue chain is Succinate--CoA ligase [ADP-forming] subunit beta (388 aa).

Residues lysine 9–glutamine 244 form the ATP-grasp domain. Residues lysine 46, glycine 53 to glycine 55, glutamate 99, threonine 102, and glutamate 107 contribute to the ATP site. Mg(2+) contacts are provided by asparagine 199 and aspartate 213. Substrate is bound by residues asparagine 264 and glycine 321–valine 323.

Belongs to the succinate/malate CoA ligase beta subunit family. As to quaternary structure, heterotetramer of two alpha and two beta subunits. It depends on Mg(2+) as a cofactor.

It catalyses the reaction succinate + ATP + CoA = succinyl-CoA + ADP + phosphate. The catalysed reaction is GTP + succinate + CoA = succinyl-CoA + GDP + phosphate. Its pathway is carbohydrate metabolism; tricarboxylic acid cycle; succinate from succinyl-CoA (ligase route): step 1/1. In terms of biological role, succinyl-CoA synthetase functions in the citric acid cycle (TCA), coupling the hydrolysis of succinyl-CoA to the synthesis of either ATP or GTP and thus represents the only step of substrate-level phosphorylation in the TCA. The beta subunit provides nucleotide specificity of the enzyme and binds the substrate succinate, while the binding sites for coenzyme A and phosphate are found in the alpha subunit. The chain is Succinate--CoA ligase [ADP-forming] subunit beta from Proteus mirabilis (strain HI4320).